Reading from the N-terminus, the 507-residue chain is ATP synthase subunit alpha, chloroplastic (507 aa).

170–177 (GDRQTGKT) lines the ATP pocket.

The protein belongs to the ATPase alpha/beta chains family. F-type ATPases have 2 components, CF(1) - the catalytic core - and CF(0) - the membrane proton channel. CF(1) has five subunits: alpha(3), beta(3), gamma(1), delta(1), epsilon(1). CF(0) has four main subunits: a, b, b' and c.

It is found in the plastid. The protein resides in the chloroplast thylakoid membrane. The catalysed reaction is ATP + H2O + 4 H(+)(in) = ADP + phosphate + 5 H(+)(out). Produces ATP from ADP in the presence of a proton gradient across the membrane. The alpha chain is a regulatory subunit. This chain is ATP synthase subunit alpha, chloroplastic, found in Atropa belladonna (Belladonna).